The sequence spans 306 residues: Probable dimethyladenosine transferase (306 aa).

The S-adenosyl-L-methionine site is built by H30, L32, G57, E78, D106, and N121.

This sequence belongs to the class I-like SAM-binding methyltransferase superfamily. rRNA adenine N(6)-methyltransferase family. As to quaternary structure, part of the small subunit (SSU) processome, composed of more than 70 proteins and the RNA chaperone small nucleolar RNA (snoRNA) U3.

Its subcellular location is the nucleus. It is found in the nucleolus. It carries out the reaction adenosine(1779)/adenosine(1780) in 18S rRNA + 4 S-adenosyl-L-methionine = N(6)-dimethyladenosine(1779)/N(6)-dimethyladenosine(1780) in 18S rRNA + 4 S-adenosyl-L-homocysteine + 4 H(+). Specifically dimethylates two adjacent adenosines in the loop of a conserved hairpin near the 3'-end of 18S rRNA in the 40S particle. Involved in the pre-rRNA processing steps leading to small-subunit rRNA production independently of its RNA-modifying catalytic activity. Part of the small subunit (SSU) processome, first precursor of the small eukaryotic ribosomal subunit. During the assembly of the SSU processome in the nucleolus, many ribosome biogenesis factors, an RNA chaperone and ribosomal proteins associate with the nascent pre-rRNA and work in concert to generate RNA folding, modifications, rearrangements and cleavage as well as targeted degradation of pre-ribosomal RNA by the RNA exosome. This Drosophila melanogaster (Fruit fly) protein is Probable dimethyladenosine transferase.